The primary structure comprises 517 residues: Bifunctional purine biosynthesis protein PurH (517 aa).

One can recognise an MGS-like domain in the interval 1 to 146 (MGRLVLLSVS…KNFAHLTVLC (146 aa)).

It belongs to the PurH family.

It catalyses the reaction (6R)-10-formyltetrahydrofolate + 5-amino-1-(5-phospho-beta-D-ribosyl)imidazole-4-carboxamide = 5-formamido-1-(5-phospho-D-ribosyl)imidazole-4-carboxamide + (6S)-5,6,7,8-tetrahydrofolate. The enzyme catalyses IMP + H2O = 5-formamido-1-(5-phospho-D-ribosyl)imidazole-4-carboxamide. Its pathway is purine metabolism; IMP biosynthesis via de novo pathway; 5-formamido-1-(5-phospho-D-ribosyl)imidazole-4-carboxamide from 5-amino-1-(5-phospho-D-ribosyl)imidazole-4-carboxamide (10-formyl THF route): step 1/1. It participates in purine metabolism; IMP biosynthesis via de novo pathway; IMP from 5-formamido-1-(5-phospho-D-ribosyl)imidazole-4-carboxamide: step 1/1. The polypeptide is Bifunctional purine biosynthesis protein PurH (Gloeothece citriformis (strain PCC 7424) (Cyanothece sp. (strain PCC 7424))).